Reading from the N-terminus, the 436-residue chain is Tubulin epsilon and delta complex protein 2 (436 aa).

Disordered regions lie at residues alanine 53–glutamine 76 and valine 94–alanine 191. Positions threonine 111–glycine 131 are enriched in low complexity. Residues aspartate 153–threonine 170 are compositionally biased toward basic and acidic residues. Serine 161 bears the Phosphoserine mark.

In terms of assembly, interacts with TEDC1. Found in a complex with TEDC1, TEDC2, TUBE1 and TUBD1.

Its subcellular location is the cell projection. It localises to the cilium. The protein resides in the cytoplasm. The protein localises to the cytoskeleton. It is found in the microtubule organizing center. Its subcellular location is the centrosome. It localises to the centriole. Its function is as follows. Acts as a positive regulator of ciliary hedgehog signaling. Required for centriole stability. The sequence is that of Tubulin epsilon and delta complex protein 2 from Mus musculus (Mouse).